We begin with the raw amino-acid sequence, 198 residues long: 3-isopropylmalate dehydratase small subunit (198 aa).

The protein belongs to the LeuD family. LeuD type 1 subfamily. As to quaternary structure, heterodimer of LeuC and LeuD.

The catalysed reaction is (2R,3S)-3-isopropylmalate = (2S)-2-isopropylmalate. It functions in the pathway amino-acid biosynthesis; L-leucine biosynthesis; L-leucine from 3-methyl-2-oxobutanoate: step 2/4. Its function is as follows. Catalyzes the isomerization between 2-isopropylmalate and 3-isopropylmalate, via the formation of 2-isopropylmaleate. The protein is 3-isopropylmalate dehydratase small subunit of Mycobacterium leprae (strain Br4923).